A 402-amino-acid polypeptide reads, in one-letter code: Zinc finger protein CONSTANS-LIKE 14 (402 aa).

Residues Cys-12, Cys-15, Cys-35, His-40, Cys-55, Cys-58, Cys-78, and His-83 each contribute to the Zn(2+) site. The B box-type 1; atypical zinc finger occupies Cys-12–Ile-54. Residues Cys-55–Val-97 form a B box-type 2; atypical zinc finger. The tract at residues Ser-287–Asp-322 is disordered. Positions His-295 to Ile-310 are enriched in polar residues. Positions Val-345 to Arg-372 form a coiled coil. Residues Arg-357–Ala-399 enclose the CCT domain.

The protein belongs to the CONSTANS family.

It localises to the nucleus. In Arabidopsis thaliana (Mouse-ear cress), this protein is Zinc finger protein CONSTANS-LIKE 14 (COL14).